The sequence spans 694 residues: Rabphilin-3A (694 aa).

Over residues 1-12 (MTDTVFSNSSNR) the composition is skewed to polar residues. The interval 1–51 (MTDTVFSNSSNRWMYPSDRPLQSNDKEQLQAGWSVHPGGQPDRQRKQEELT) is disordered. One can recognise a RabBD domain in the interval 44–160 (QRKQEELTDE…KRSGAWFFKG (117 aa)). An FYVE-type zinc finger spans residues 92-148 (GDGVNRCILCGEQLGMLGSACVVCEDCKKNVCTKCGVETNNRLHSVWLCKICIEQRE). Positions 98, 101, 115, 118, 123, 126, 140, and 143 each coordinate Zn(2+). The segment at 166–388 (LPQPMPIKKT…EEEANSYDSD (223 aa)) is disordered. The span at 177-186 (PQQPVSEPAA) shows a compositional bias: low complexity. Basic and acidic residues predominate over residues 202 to 211 (ARGDSEDRRG). The residue at position 226 (Arg226) is an Omega-N-methylarginine. Ser272 carries the phosphoserine modification. A compositionally biased stretch (low complexity) spans 352–370 (PSGPYSQASAAAPQPAAAR). The segment covering 375–388 (PEEEEEEANSYDSD) has biased composition (acidic residues). One can recognise a C2 1 domain in the interval 392-514 (TLGALEFSLL…KPNQRKNFNI (123 aa)). Positions 422, 423, 429, 484, 485, 486, 492, 539, 581, 587, 641, 642, 643, and 649 each coordinate Ca(2+). Residues 550–683 (ERGKILVSLM…NKDKKIERWH (134 aa)) form the C2 2 domain. Phosphoserine occurs at positions 692 and 693.

In terms of assembly, interacts with RAB3B, RAB3C, RAB3D, RAB8A, RAB27A and RAB27B. Interacts with RAB3A; this interaction recruits RPH3A to synaptic vesicules. Interacts (via C2B domain) with SNAP25. Interacts with deubiquitinating enzyme CAND1; this interaction results in the deubiquitination of RPH3A. Interacts with GRIN2A and DLG4; this ternary complex regulates NMDA receptor composition at postsynaptic membranes. Interacts with SNCA. Ca(2+) is required as a cofactor. Post-translationally, ubiquitinated. Deubiquitinated by CAND1 to prevent its degradation.

It is found in the cytoplasmic vesicle. It localises to the secretory vesicle. Its subcellular location is the synaptic vesicle membrane. The protein resides in the cell projection. The protein localises to the dendritic spine. It is found in the postsynaptic cell membrane. It localises to the membrane. Functionally, plays an essential role in docking and fusion steps of regulated exocytosis. At the presynaptic level, RPH3A is recruited by RAB3A to the synaptic vesicle membrane in a GTP-dependent manner where it modulates synaptic vesicle trafficking and calcium-triggered neurotransmitter release. In the post-synaptic compartment, forms a ternary complex with GRIN2A and DLG4 and regulates NMDA receptor stability. Also plays a role in the exocytosis of arginine vasopressin hormone. The protein is Rabphilin-3A (RPH3A) of Homo sapiens (Human).